A 65-amino-acid polypeptide reads, in one-letter code: Large ribosomal subunit protein uL29 (65 aa).

This sequence belongs to the universal ribosomal protein uL29 family.

The chain is Large ribosomal subunit protein uL29 from Leptothrix cholodnii (strain ATCC 51168 / LMG 8142 / SP-6) (Leptothrix discophora (strain SP-6)).